The primary structure comprises 352 residues: Plant intracellular Ras-group-related LRR protein 1 (352 aa).

The interval 1-25 (MREMGEKRRRGHLNPAGFAGGLHDH) is disordered. 10 LRR repeats span residues 29-52 (KNEEHKLDMSGMSMDALPHLTMSL), 53-75 (GQVTILDLSNNNLESIPESIIAR), 77-99 (LNVVVLDVRSNQLKSLPNSIGCL), 100-122 (SKLKVLNVSGNLLESLPNTIEEC), 124-146 (ALEELHANFNELTKLPDTLGFEL), 147-169 (HSLRKLSVNSNKLAQLPSSTSHM), 171-192 (ALRALDARLNCLRALPDGLENL), 195-217 (LEALNVSQNFQFLRELPYAVGLL), 218-241 (ASLRELDVSYNSIAALPDSMGCLT), and 243-263 (LARFSAVGNPLVSPPMDVVEQ). The GVYW; degenerate motif lies at 264-271 (GLDAMRAY).

Belongs to the SHOC2 family. As to expression, widely expressed but at a lower level in seedlings and stems.

In terms of biological role, leucine-rich repeat protein that likely mediates protein interactions, possibly in the context of signal transduction. This Oryza sativa subsp. japonica (Rice) protein is Plant intracellular Ras-group-related LRR protein 1 (IRL1).